The chain runs to 153 residues: Inner membrane protein YjiG (153 aa).

Over 1-31 the chain is Periplasmic; it reads MTTQVRKNVMDMFIDGARRGFTIATTNLLPN. Residues 32–52 form a helical membrane-spanning segment; the sequence is VVMAFVIIQALKITGLLDWVG. At 53–68 the chain is on the cytoplasmic side; sequence HICEPVMALWGLPGEA. Helical transmembrane passes span 69–89 and 90–110; these read ATVL…AASL and ATAG…MYLM. Topologically, residues 111–132 are cytoplasmic; sequence GNPVQNVGRCLGTAEVNAKYYP. The helical transmembrane segment at 133 to 153 threads the bilayer; it reads HIITVCVINALLSIWVMQLIV.

This sequence belongs to the SpmB family.

The protein localises to the cell inner membrane. This Escherichia coli O157:H7 protein is Inner membrane protein YjiG (yjiG).